Reading from the N-terminus, the 489-residue chain is 3-octaprenyl-4-hydroxybenzoate carboxy-lyase (489 aa).

Residue Asn172 coordinates Mn(2+). Residues 175–177 (IYR), 189–191 (RWL), and 194–195 (RG) contribute to the prenylated FMN site. Glu238 lines the Mn(2+) pocket. Asp287 serves as the catalytic Proton donor.

It belongs to the UbiD family. Homohexamer. The cofactor is prenylated FMN. Mn(2+) is required as a cofactor.

Its subcellular location is the cell membrane. The enzyme catalyses a 4-hydroxy-3-(all-trans-polyprenyl)benzoate + H(+) = a 2-(all-trans-polyprenyl)phenol + CO2. The protein operates within cofactor biosynthesis; ubiquinone biosynthesis. Its function is as follows. Catalyzes the decarboxylation of 3-octaprenyl-4-hydroxy benzoate to 2-octaprenylphenol, an intermediate step in ubiquinone biosynthesis. This Glaesserella parasuis serovar 5 (strain SH0165) (Haemophilus parasuis) protein is 3-octaprenyl-4-hydroxybenzoate carboxy-lyase.